We begin with the raw amino-acid sequence, 276 residues long: Sulfur carrier protein FdhD (276 aa).

The active-site Cysteine persulfide intermediate is the Cys120.

Belongs to the FdhD family.

It localises to the cytoplasm. Its function is as follows. Required for formate dehydrogenase (FDH) activity. Acts as a sulfur carrier protein that transfers sulfur from IscS to the molybdenum cofactor prior to its insertion into FDH. This Bordetella parapertussis (strain 12822 / ATCC BAA-587 / NCTC 13253) protein is Sulfur carrier protein FdhD.